Consider the following 71-residue polypeptide: uncharacterized protein (71 aa).

The N-terminal stretch at 1–26 is a signal peptide; the sequence is MIKFSVILGMIRCSLTHITTKNTVNA.

This is an uncharacterized protein from Bacillus subtilis (strain 168).